The following is a 281-amino-acid chain: Phosphatidylglycerol--prolipoprotein diacylglyceryl transferase (281 aa).

Helical transmembrane passes span 29–49 (FYSL…GKMI), 64–84 (LFFY…VLFY), 100–120 (GGMS…FVSW), and 124–144 (LNWL…MFLG). A 1,2-diacyl-sn-glycero-3-phospho-(1'-sn-glycerol) is bound at residue arginine 145. 3 helical membrane-spanning segments follow: residues 180–200 (QLYQ…LLFW), 209–229 (GVLV…NEFF), and 248–268 (GQWL…YALT).

The protein belongs to the Lgt family.

The protein localises to the cell inner membrane. The enzyme catalyses L-cysteinyl-[prolipoprotein] + a 1,2-diacyl-sn-glycero-3-phospho-(1'-sn-glycerol) = an S-1,2-diacyl-sn-glyceryl-L-cysteinyl-[prolipoprotein] + sn-glycerol 1-phosphate + H(+). The protein operates within protein modification; lipoprotein biosynthesis (diacylglyceryl transfer). Functionally, catalyzes the transfer of the diacylglyceryl group from phosphatidylglycerol to the sulfhydryl group of the N-terminal cysteine of a prolipoprotein, the first step in the formation of mature lipoproteins. In Erythrobacter litoralis (strain HTCC2594), this protein is Phosphatidylglycerol--prolipoprotein diacylglyceryl transferase.